Reading from the N-terminus, the 165-residue chain is 3-isopropylmalate dehydratase small subunit (165 aa).

Belongs to the LeuD family. LeuD type 2 subfamily. Heterodimer of LeuC and LeuD.

It carries out the reaction (2R,3S)-3-isopropylmalate = (2S)-2-isopropylmalate. Its pathway is amino-acid biosynthesis; L-leucine biosynthesis; L-leucine from 3-methyl-2-oxobutanoate: step 2/4. Catalyzes the isomerization between 2-isopropylmalate and 3-isopropylmalate, via the formation of 2-isopropylmaleate. The protein is 3-isopropylmalate dehydratase small subunit of Saccharolobus islandicus (strain Y.G.57.14 / Yellowstone #1) (Sulfolobus islandicus).